The following is a 381-amino-acid chain: Succinyl-diaminopimelate desuccinylase (381 aa).

His68 is a Zn(2+) binding site. Asp70 is a catalytic residue. Position 101 (Asp101) interacts with Zn(2+). Glu135 functions as the Proton acceptor in the catalytic mechanism. Residues Glu136, Glu164, and His350 each coordinate Zn(2+).

This sequence belongs to the peptidase M20A family. DapE subfamily. In terms of assembly, homodimer. Zn(2+) serves as cofactor. Requires Co(2+) as cofactor.

It carries out the reaction N-succinyl-(2S,6S)-2,6-diaminopimelate + H2O = (2S,6S)-2,6-diaminopimelate + succinate. The protein operates within amino-acid biosynthesis; L-lysine biosynthesis via DAP pathway; LL-2,6-diaminopimelate from (S)-tetrahydrodipicolinate (succinylase route): step 3/3. Its function is as follows. Catalyzes the hydrolysis of N-succinyl-L,L-diaminopimelic acid (SDAP), forming succinate and LL-2,6-diaminopimelate (DAP), an intermediate involved in the bacterial biosynthesis of lysine and meso-diaminopimelic acid, an essential component of bacterial cell walls. The sequence is that of Succinyl-diaminopimelate desuccinylase from Neisseria gonorrhoeae (strain ATCC 700825 / FA 1090).